The primary structure comprises 112 residues: UPF0060 membrane protein XOO1694 (112 aa).

The next 4 helical transmembrane spans lie at L8–W28, G32–L52, V62–V82, and L92–A112.

Belongs to the UPF0060 family.

The protein resides in the cell inner membrane. This is UPF0060 membrane protein XOO1694 from Xanthomonas oryzae pv. oryzae (strain MAFF 311018).